The chain runs to 259 residues: DNA adenine methylase (259 aa).

S-adenosyl-L-methionine is bound by residues tyrosine 7, lysine 11, 32 to 37 (FCGGLS), aspartate 50, 156 to 157 (HF), aspartate 171, and tyrosine 181.

The protein belongs to the N(4)/N(6)-methyltransferase family. Monomer.

It carries out the reaction a 2'-deoxyadenosine in DNA + S-adenosyl-L-methionine = an N(6)-methyl-2'-deoxyadenosine in DNA + S-adenosyl-L-homocysteine + H(+). An alpha subtype methylase, recognizes the double-stranded sequence 5'-GATC-3' and methylates A-2. Also acts on 5-hydroxymethylcytosine (hmC)-containing DNA, the normal base in this virus. May prevent degradation of viral DNA by the host restriction-modification antiviral defense system. The protein is DNA adenine methylase of Enterobacteria phage T4 (Bacteriophage T4).